Consider the following 294-residue polypeptide: DEP domain-containing protein 4 (294 aa).

Residues 71–162 (LQAQVEIKRR…SNISLYRFLG (92 aa)) enclose the DEP domain.

The protein is DEP domain-containing protein 4 (DEPDC4) of Homo sapiens (Human).